The sequence spans 349 residues: tRNA pseudouridine synthase D (349 aa).

Phe-26 lines the substrate pocket. The Nucleophile role is filled by Asp-79. A substrate-binding site is contributed by Asn-128. The TRUD domain maps to 154-302 (GVPNYFGSQR…VEGSRRAVLL (149 aa)). Phe-328 is a substrate binding site.

It belongs to the pseudouridine synthase TruD family.

The catalysed reaction is uridine(13) in tRNA = pseudouridine(13) in tRNA. Functionally, responsible for synthesis of pseudouridine from uracil-13 in transfer RNAs. The protein is tRNA pseudouridine synthase D of Yersinia pseudotuberculosis serotype IB (strain PB1/+).